Reading from the N-terminus, the 76-residue chain is DNA-directed RNA polymerase subunit omega (76 aa).

This sequence belongs to the RNA polymerase subunit omega family. In cyanobacteria the RNAP catalytic core is composed of 2 alpha, 1 beta, 1 beta', 1 gamma and 1 omega subunit. When a sigma factor is associated with the core the holoenzyme is formed, which can initiate transcription.

It catalyses the reaction RNA(n) + a ribonucleoside 5'-triphosphate = RNA(n+1) + diphosphate. In terms of biological role, promotes RNA polymerase assembly. Latches the N- and C-terminal regions of the beta' subunit thereby facilitating its interaction with the beta and alpha subunits. The protein is DNA-directed RNA polymerase subunit omega of Acaryochloris marina (strain MBIC 11017).